The primary structure comprises 1498 residues: Transposon Ty3-I Gag-Pol polyprotein (1498 aa).

The segment at 265–282 (RLCFYCKKEGHRLNECRA) adopts a CCHC-type zinc-finger fold. Asp336 serves as the catalytic For protease activity; shared with dimeric partner. The segment at 470–490 (TDPKSAGNRGNPRNTKLSLAP) is disordered. The Reverse transcriptase domain maps to 646–823 (LDNKFIVPSK…EETEFLGYSI (178 aa)). Asp712, Asp774, and Asp775 together coordinate Mg(2+). One can recognise an RNase H Ty3/gyspy-type domain in the interval 919-1037 (DASKDGIGAV…VADAISRAIY (119 aa)). An integrase-type zinc finger-like region spans residues 1132–1171 (HTLFGGHFGVTVTLAKISPIYYWPKLQHSIIQYIRTCVQC). The 166-residue stretch at 1185 to 1350 (LQPLPIAEGR…SPFEIDLGYL (166 aa)) folds into the Integrase catalytic domain. The Mg(2+) site is built by Asp1201 and Asp1262.

As to quaternary structure, the protease is a homodimer, whose active site consists of two apposed aspartic acid residues. Initially, virus-like particles (VLPs) are composed of the structural unprocessed proteins Gag and Gag-Pol, and also contain the host initiator methionine tRNA (tRNA(i)-Met) which serves as a primer for minus-strand DNA synthesis, and a dimer of genomic Ty RNA. Processing of the polyproteins occurs within the particle and proceeds by an ordered pathway, called maturation. First, the protease (PR) is released by autocatalytic cleavage of the Gag-Pol polyprotein, and this cleavage is a prerequisite for subsequent processing at the remaining sites to release the mature structural and catalytic proteins. Maturation takes place prior to the RT reaction and is required to produce transposition-competent VLPs.

It localises to the cytoplasm. The protein resides in the nucleus. It carries out the reaction DNA(n) + a 2'-deoxyribonucleoside 5'-triphosphate = DNA(n+1) + diphosphate. It catalyses the reaction Endonucleolytic cleavage to 5'-phosphomonoester.. Functionally, capsid protein (CA) is the structural component of the virus-like particle (VLP), forming the shell that encapsulates the genomic RNA-nucleocapsid complex. In terms of biological role, nucleocapsid protein p11 (NC) forms the nucleocore that coats the retro-elements dimeric RNA. Binds these RNAs through its zinc fingers. Promotes primer tRNA(i)-Met annealing to the multipartite primer-binding site (PBS), dimerization of Ty3 RNA and initiation of reverse transcription. Its function is as follows. The aspartyl protease (PR) mediates the proteolytic cleavages of the Gag and Gag-Pol polyproteins after assembly of the VLP. Reverse transcriptase/ribonuclease H (RT) is a multifunctional enzyme that catalyzes the conversion of the retro-elements RNA genome into dsDNA within the VLP. The enzyme displays a DNA polymerase activity that can copy either DNA or RNA templates, and a ribonuclease H (RNase H) activity that cleaves the RNA strand of RNA-DNA heteroduplexes during plus-strand synthesis and hydrolyzes RNA primers. The conversion leads to a linear dsDNA copy of the retrotransposon that includes long terminal repeats (LTRs) at both ends. Functionally, integrase (IN) targets the VLP to the nucleus, where a subparticle preintegration complex (PIC) containing at least integrase and the newly synthesized dsDNA copy of the retrotransposon must transit the nuclear membrane. Once in the nucleus, integrase performs the integration of the dsDNA into the host genome. The polypeptide is Transposon Ty3-I Gag-Pol polyprotein (TY3B-I) (Saccharomyces cerevisiae (strain ATCC 204508 / S288c) (Baker's yeast)).